A 269-amino-acid chain; its full sequence is uncharacterized protein (269 aa).

8 consecutive transmembrane segments (helical) span residues 9–29 (YIIG…AHLF), 50–70 (FMLG…IVPL), 82–102 (FSII…VWAF), 107–127 (LYWT…MYGQ), 147–167 (LVFG…LHCT), 173–193 (VFSN…ILGF), 200–220 (LVSA…HLFA), and 224–244 (IFAF…FLLP).

It localises to the membrane. This is an uncharacterized protein from Schizosaccharomyces pombe (strain 972 / ATCC 24843) (Fission yeast).